The sequence spans 801 residues: Endonuclease MutS2 (801 aa).

336–343 (GPNTGGKT) serves as a coordination point for ATP. The interval 696–721 (AQQSKAKQKQQKIVKTKTASGSARAT) is disordered. Residues 701–710 (AKQKQQKIVK) show a composition bias toward basic residues. The region spanning 726 to 801 (LDLRGVRYEA…GDGATIAELS (76 aa)) is the Smr domain.

It belongs to the DNA mismatch repair MutS family. MutS2 subfamily. In terms of assembly, homodimer. Binds to stalled ribosomes, contacting rRNA.

Functionally, endonuclease that is involved in the suppression of homologous recombination and thus may have a key role in the control of bacterial genetic diversity. Acts as a ribosome collision sensor, splitting the ribosome into its 2 subunits. Detects stalled/collided 70S ribosomes which it binds and splits by an ATP-hydrolysis driven conformational change. Acts upstream of the ribosome quality control system (RQC), a ribosome-associated complex that mediates the extraction of incompletely synthesized nascent chains from stalled ribosomes and their subsequent degradation. Probably generates substrates for RQC. The protein is Endonuclease MutS2 of Leuconostoc citreum (strain KM20).